We begin with the raw amino-acid sequence, 454 residues long: MPQAIVALVGKPNVGKSTLFNRLSLREKSIVHDLPGITRDRKYAKANLFSDLIVVDTPGLEFAAAGSLEFNMMQQSLVAINEANIICFVVDAITGILPIDEECANLIRKHNKQSSTILVINKTEKPIILDKSYYKLGFSESICISAKHGQGIYELGDIIQNILSEDKKINVLTTTNTKCEYNQQCPELQLAIVGRPNCGKSTFINAILNEERVLTGPESGLTRNSVEVDWKYCGQLIRLVDTAGVRKKNAVTQSCELLSVNDTFKTIRFANIVIVMIDATRGLEQQDLSIISYAVNEGRGIVLVVNKCDLIKKKEEFQKELNRLVAYSVFQIKGINPIYISAKEKFNLESVLQKCVLTYASWQKRVTTGTLNQWLAKAMSNRPLPFQSHGKRVKIKYCTQTKARPPTIKLFCNNIESIDESYKRYLINNFKLNFDIAAGVPVRLSFVKGKNPYR.

2 EngA-type G domains span residues 4-167 (AIVA…SEDK) and 188-363 (LQLA…ASWQ). GTP is bound by residues 10-17 (GKPNVGKS), 56-60 (DTPGL), 121-124 (NKTE), 194-201 (GRPNCGKS), 241-245 (DTAGV), and 306-309 (NKCD). The KH-like domain occupies 364–450 (KRVTTGTLNQ…PVRLSFVKGK (87 aa)).

This sequence belongs to the TRAFAC class TrmE-Era-EngA-EngB-Septin-like GTPase superfamily. EngA (Der) GTPase family. In terms of assembly, associates with the 50S ribosomal subunit.

GTPase that plays an essential role in the late steps of ribosome biogenesis. This Orientia tsutsugamushi (strain Boryong) (Rickettsia tsutsugamushi) protein is GTPase Der.